Here is a 207-residue protein sequence, read N- to C-terminus: uncharacterized protein (207 aa).

This sequence belongs to the IIV-6 350L family.

This is an uncharacterized protein from Invertebrate iridescent virus 6 (IIV-6).